Consider the following 205-residue polypeptide: Peptidyl-tRNA hydrolase (205 aa).

Y18 is a tRNA binding site. The Proton acceptor role is filled by H23. Residues Y69, N71, and N117 each contribute to the tRNA site.

Belongs to the PTH family. Monomer.

The protein resides in the cytoplasm. The catalysed reaction is an N-acyl-L-alpha-aminoacyl-tRNA + H2O = an N-acyl-L-amino acid + a tRNA + H(+). Its function is as follows. Hydrolyzes ribosome-free peptidyl-tRNAs (with 1 or more amino acids incorporated), which drop off the ribosome during protein synthesis, or as a result of ribosome stalling. In terms of biological role, catalyzes the release of premature peptidyl moieties from peptidyl-tRNA molecules trapped in stalled 50S ribosomal subunits, and thus maintains levels of free tRNAs and 50S ribosomes. The protein is Peptidyl-tRNA hydrolase of Synechococcus sp. (strain CC9605).